Consider the following 356-residue polypeptide: 3-isopropylmalate dehydrogenase (356 aa).

73–86 (GTQYDGLPREKRPE) contacts NAD(+). The substrate site is built by Arg-93, Arg-103, Arg-131, and Asp-220. 3 residues coordinate Mg(2+): Asp-220, Asp-244, and Asp-248. 278–290 (GSAPDIAGKGIAN) contacts NAD(+).

It belongs to the isocitrate and isopropylmalate dehydrogenases family. LeuB type 1 subfamily. As to quaternary structure, homodimer. Mg(2+) serves as cofactor. Mn(2+) is required as a cofactor.

The protein resides in the cytoplasm. It catalyses the reaction (2R,3S)-3-isopropylmalate + NAD(+) = 4-methyl-2-oxopentanoate + CO2 + NADH. The protein operates within amino-acid biosynthesis; L-leucine biosynthesis; L-leucine from 3-methyl-2-oxobutanoate: step 3/4. Functionally, catalyzes the oxidation of 3-carboxy-2-hydroxy-4-methylpentanoate (3-isopropylmalate) to 3-carboxy-4-methyl-2-oxopentanoate. The product decarboxylates to 4-methyl-2 oxopentanoate. The protein is 3-isopropylmalate dehydrogenase of Nitrosomonas europaea (strain ATCC 19718 / CIP 103999 / KCTC 2705 / NBRC 14298).